The chain runs to 406 residues: Phosphoglycerate kinase (406 aa).

Substrate is bound by residues 22 to 24, arginine 37, 60 to 63, arginine 119, and arginine 152; these read DLN and HLGN. Residues lysine 202, glutamate 325, and 355–358 each bind ATP; that span reads GGDT.

Belongs to the phosphoglycerate kinase family. As to quaternary structure, monomer.

It is found in the cytoplasm. The catalysed reaction is (2R)-3-phosphoglycerate + ATP = (2R)-3-phospho-glyceroyl phosphate + ADP. Its pathway is carbohydrate degradation; glycolysis; pyruvate from D-glyceraldehyde 3-phosphate: step 2/5. This chain is Phosphoglycerate kinase, found in Orientia tsutsugamushi (strain Ikeda) (Rickettsia tsutsugamushi).